The primary structure comprises 294 residues: GTPase Era (294 aa).

Positions N2 to E171 constitute an Era-type G domain. The segment at G10–S17 is G1. G10–S17 contributes to the GTP binding site. The interval Q36–N40 is G2. Residues D57–G60 form a G3 region. GTP contacts are provided by residues D57–Y61 and N119–D122. Positions N119–D122 are G4. Residues I150–A152 form a G5 region. In terms of domain architecture, KH type-2 spans T202–K280.

Belongs to the TRAFAC class TrmE-Era-EngA-EngB-Septin-like GTPase superfamily. Era GTPase family. As to quaternary structure, monomer.

Its subcellular location is the cytoplasm. It localises to the cell inner membrane. An essential GTPase that binds both GDP and GTP, with rapid nucleotide exchange. Plays a role in 16S rRNA processing and 30S ribosomal subunit biogenesis and possibly also in cell cycle regulation and energy metabolism. The sequence is that of GTPase Era from Treponema denticola (strain ATCC 35405 / DSM 14222 / CIP 103919 / JCM 8153 / KCTC 15104).